The sequence spans 89 residues: UPF0147 protein Saci_0891 (89 aa).

The protein belongs to the UPF0147 family.

The sequence is that of UPF0147 protein Saci_0891 from Sulfolobus acidocaldarius (strain ATCC 33909 / DSM 639 / JCM 8929 / NBRC 15157 / NCIMB 11770).